Consider the following 37-residue polypeptide: Large ribosomal subunit protein bL36c (37 aa).

It belongs to the bacterial ribosomal protein bL36 family.

The protein resides in the plastid. The protein localises to the chloroplast. The sequence is that of Large ribosomal subunit protein bL36c from Mesembryanthemum crystallinum (Common ice plant).